The sequence spans 397 residues: Putative odorant receptor 83c (397 aa).

The Cytoplasmic segment spans residues 1–39 (MSTSESPSSRFRELSKYINSLTNLLGVDFLSPKLKFNYR). The chain crosses the membrane as a helical span at residues 40–60 (TWTTIFAIANYTGFTVFTILN). Topologically, residues 61–70 (NGGDWRVGLK) are extracellular. Residues 71 to 90 (ASLMTGGLFHGLGKFLTCLL) traverse the membrane as a helical segment. Over 91 to 136 (KHQDMRRLVLYSQSIYDEYETRGDSYHRTLNSNIDRLLGIMKIIRN) the chain is Cytoplasmic. Residues 137–157 (GYVFAFCLMELLPLAMLMYDG) traverse the membrane as a helical segment. At 158-186 (TRVTAMQYLIPGLPLENNYCYVVTYMIQT) the chain is on the extracellular side. The helical transmembrane segment at 187 to 207 (VTMLVQGVGFYSGDLFVFLGL) threads the bilayer. The Cytoplasmic portion of the chain corresponds to 208 to 282 (TQILTFADML…ALYYELIATQ (75 aa)). A helical transmembrane segment spans residues 283-299 (VLSMALAMMLSFCINLS). The Extracellular portion of the chain corresponds to 300–305 (SFHMPS). A helical membrane pass occupies residues 306 to 326 (AIFFVVSAYSMSIYCILGTIL). The Cytoplasmic portion of the chain corresponds to 327–365 (EFAYDQVYESICNVTWYELSGEQRKLFGFLLRESQYPHN). A helical membrane pass occupies residues 366–386 (IQILGVMSLSVRTALQIVKLI). The Extracellular portion of the chain corresponds to 387–397 (YSVSMMMMNRA).

It belongs to the insect chemoreceptor superfamily. Heteromeric odorant receptor channel (TC 1.A.69) family. Or67d subfamily. As to quaternary structure, interacts with Orco. Complexes exist early in the endomembrane system in olfactory sensory neurons (OSNs), coupling these complexes to the conserved ciliary trafficking pathway. As to expression, expressed in olfactory sensory neurons in the antenna.

The protein localises to the cell membrane. In terms of biological role, odorant receptor which mediates acceptance or avoidance behavior, depending on its substrates. The odorant receptor repertoire encodes a large collection of odor stimuli that vary widely in identity, intensity, and duration. May form a complex with Orco to form odorant-sensing units, providing sensitive and prolonged odorant signaling and calcium permeability. This is Putative odorant receptor 83c (Or83c) from Drosophila melanogaster (Fruit fly).